The following is an 86-amino-acid chain: Heat shock factor-binding protein (86 aa).

A coiled-coil region spans residues 34–63 (MSDSIITKIDDMGGRINELEQSINDLRAEM). The tract at residues 42–52 (IDDMGGRINEL) is required for interactions with heat shock factors (HSFs). The tract at residues 59 to 86 (LRAEMGVEGTPPPASKSGDEPKTPASSS) is disordered.

This sequence belongs to the HSBP1 family. As to quaternary structure, homohexamer. Interacts with HSFA1A, HSFA1B and HSFA2. In terms of tissue distribution, mostly expressed in siliques and flowers, and, to a lower extent, in roots, stems and leaves.

It localises to the nucleus. The protein resides in the cytoplasm. The protein localises to the cytosol. Negative regulator of the heat shock (HS) response. Affects negatively HSFA1B DNA-binding capacity in vitro. Involved in acquired thermotolerance but not basal thermotolerance. Crucial for seed development, after fertilization and during embryogenesis. The sequence is that of Heat shock factor-binding protein from Arabidopsis thaliana (Mouse-ear cress).